Reading from the N-terminus, the 398-residue chain is Glia-derived nexin (398 aa).

Residues 1-19 form the signal peptide; sequence MNWHLPLFLLASVTLPSIC. 2 N-linked (GlcNAc...) asparagine glycosylation sites follow: N118 and N159.

The protein belongs to the serpin family.

Its subcellular location is the secreted. It localises to the extracellular space. In terms of biological role, serine protease inhibitor with activity toward thrombin, trypsin, and urokinase. Promotes neurite extension by inhibiting thrombin. Binds heparin. The protein is Glia-derived nexin (SERPINE2) of Homo sapiens (Human).